Here is a 214-residue protein sequence, read N- to C-terminus: MKIWIKAICITSFVIQMSACSSSAQTKNDSRPAQAVQNGIQQHVEGKDIVDIPEAYKRKLKGLETVKGKVLHIKDGDTIDVNVKGQKQTVRLLLLDTPESVSQKIPPQKMGKEASFFLKKQLDGKSVTLVYDQGPKEDKYGRKLAYVFCNGIHINELMAKSGYGIIAYIFKPNTTLLPEMLEAEKEAKEAKAGVWSIKGFVDEKNRHYNRNDAA.

The signal sequence occupies residues 1–24; it reads MKIWIKAICITSFVIQMSACSSSA. Residues 64-197 enclose the TNase-like domain; sequence ETVKGKVLHI…KEAKAGVWSI (134 aa). Residues arginine 91, glutamate 99, and arginine 142 contribute to the active site.

This is an uncharacterized protein from Bacillus anthracis.